A 165-amino-acid polypeptide reads, in one-letter code: Coronafacic acid dehydratase (165 aa).

Histidine 62 is an active-site residue.

It belongs to the thioester dehydratase family.

Its pathway is phytotoxin biosynthesis; coronatine biosynthesis. The sequence is that of Coronafacic acid dehydratase (cfa2) from Pseudomonas savastanoi pv. glycinea (Pseudomonas syringae pv. glycinea).